The sequence spans 242 residues: MILLISDLHLEEKRPDITRAFLHFLATRARQAEALYILGDFFEVWIGDDGMTPFQHEIAGALRELSDSGTRIYLMHGNRDFLIGKRFCREAGCTLLGDPHRVQMNGEPVLLMHGDSLCTLDVGYMKLRRWLRNPLSLLILRNLPLATRQKLARKLRNESRAQTRMKASEIVDVTPEEVVRVMGEYDVRTLIHGHTHRPAVHELEVNGQPARRIVLGDWDRQGWALQVDGEGFNQAPFELTPA.

5 residues coordinate Mn(2+): Asp-7, His-9, Asp-40, Asn-78, and His-113. 78–79 (NR) lines the substrate pocket. Residues Asp-121, Ser-159, Thr-163, Lys-166, and His-194 each contribute to the substrate site. Positions 194 and 196 each coordinate Mn(2+).

It belongs to the LpxH family. The cofactor is Mn(2+).

The protein resides in the cell inner membrane. The enzyme catalyses UDP-2-N,3-O-bis[(3R)-3-hydroxytetradecanoyl]-alpha-D-glucosamine + H2O = 2-N,3-O-bis[(3R)-3-hydroxytetradecanoyl]-alpha-D-glucosaminyl 1-phosphate + UMP + 2 H(+). It functions in the pathway glycolipid biosynthesis; lipid IV(A) biosynthesis; lipid IV(A) from (3R)-3-hydroxytetradecanoyl-[acyl-carrier-protein] and UDP-N-acetyl-alpha-D-glucosamine: step 4/6. Functionally, hydrolyzes the pyrophosphate bond of UDP-2,3-diacylglucosamine to yield 2,3-diacylglucosamine 1-phosphate (lipid X) and UMP by catalyzing the attack of water at the alpha-P atom. Involved in the biosynthesis of lipid A, a phosphorylated glycolipid that anchors the lipopolysaccharide to the outer membrane of the cell. The protein is UDP-2,3-diacylglucosamine hydrolase of Ectopseudomonas mendocina (strain ymp) (Pseudomonas mendocina).